The sequence spans 321 residues: Glucokinase (321 aa).

Residue 8–13 coordinates ATP; sequence GDVGGT.

The protein belongs to the bacterial glucokinase family.

Its subcellular location is the cytoplasm. The catalysed reaction is D-glucose + ATP = D-glucose 6-phosphate + ADP + H(+). The sequence is that of Glucokinase from Salmonella schwarzengrund (strain CVM19633).